Here is a 341-residue protein sequence, read N- to C-terminus: N-acetyl-gamma-glutamyl-phosphate reductase (341 aa).

Cys147 is an active-site residue.

Belongs to the NAGSA dehydrogenase family. Type 1 subfamily.

Its subcellular location is the cytoplasm. It catalyses the reaction N-acetyl-L-glutamate 5-semialdehyde + phosphate + NADP(+) = N-acetyl-L-glutamyl 5-phosphate + NADPH + H(+). It participates in amino-acid biosynthesis; L-arginine biosynthesis; N(2)-acetyl-L-ornithine from L-glutamate: step 3/4. Catalyzes the NADPH-dependent reduction of N-acetyl-5-glutamyl phosphate to yield N-acetyl-L-glutamate 5-semialdehyde. The polypeptide is N-acetyl-gamma-glutamyl-phosphate reductase (Staphylococcus epidermidis (strain ATCC 35984 / DSM 28319 / BCRC 17069 / CCUG 31568 / BM 3577 / RP62A)).